The chain runs to 409 residues: Argininosuccinate synthase (409 aa).

ATP-binding positions include 12–20 (AYSGGLDTS) and Ala39. Tyr91 serves as a coordination point for L-citrulline. Position 121 (Gly121) interacts with ATP. Residues Thr123, Asn127, and Asp128 each contribute to the L-aspartate site. Asn127 is a binding site for L-citrulline. L-citrulline contacts are provided by Arg131, Ser180, Ser189, Glu265, and Tyr277.

The protein belongs to the argininosuccinate synthase family. Type 1 subfamily. In terms of assembly, homotetramer.

Its subcellular location is the cytoplasm. It carries out the reaction L-citrulline + L-aspartate + ATP = 2-(N(omega)-L-arginino)succinate + AMP + diphosphate + H(+). The protein operates within amino-acid biosynthesis; L-arginine biosynthesis; L-arginine from L-ornithine and carbamoyl phosphate: step 2/3. In Buchnera aphidicola subsp. Baizongia pistaciae (strain Bp), this protein is Argininosuccinate synthase.